The primary structure comprises 280 residues: Pantothenate synthetase (280 aa).

An ATP-binding site is contributed by 31–38 (MGNLHAGH). Residue H38 is the Proton donor of the active site. Q62 contributes to the (R)-pantoate binding site. Q62 lines the beta-alanine pocket. Residue 150–153 (GKKD) participates in ATP binding. Residue Q156 participates in (R)-pantoate binding. ATP-binding positions include V179 and 187-190 (MSSR).

The protein belongs to the pantothenate synthetase family. Homodimer.

It localises to the cytoplasm. The catalysed reaction is (R)-pantoate + beta-alanine + ATP = (R)-pantothenate + AMP + diphosphate + H(+). Its pathway is cofactor biosynthesis; (R)-pantothenate biosynthesis; (R)-pantothenate from (R)-pantoate and beta-alanine: step 1/1. In terms of biological role, catalyzes the condensation of pantoate with beta-alanine in an ATP-dependent reaction via a pantoyl-adenylate intermediate. The chain is Pantothenate synthetase from Xanthomonas euvesicatoria pv. vesicatoria (strain 85-10) (Xanthomonas campestris pv. vesicatoria).